Here is a 163-residue protein sequence, read N- to C-terminus: 2-C-methyl-D-erythritol 2,4-cyclodiphosphate synthase (163 aa).

The a divalent metal cation site is built by D10 and H12. Residues 10-12 and 36-37 each bind 4-CDP-2-C-methyl-D-erythritol 2-phosphate; these read DVH and HS. H44 serves as a coordination point for a divalent metal cation. 4-CDP-2-C-methyl-D-erythritol 2-phosphate contacts are provided by residues 58 to 60, 63 to 67, 134 to 137, F141, and R144; these read DIG, FPDND, and TTTE.

Belongs to the IspF family. Homotrimer. A divalent metal cation serves as cofactor.

The catalysed reaction is 4-CDP-2-C-methyl-D-erythritol 2-phosphate = 2-C-methyl-D-erythritol 2,4-cyclic diphosphate + CMP. It functions in the pathway isoprenoid biosynthesis; isopentenyl diphosphate biosynthesis via DXP pathway; isopentenyl diphosphate from 1-deoxy-D-xylulose 5-phosphate: step 4/6. Involved in the biosynthesis of isopentenyl diphosphate (IPP) and dimethylallyl diphosphate (DMAPP), two major building blocks of isoprenoid compounds. Catalyzes the conversion of 4-diphosphocytidyl-2-C-methyl-D-erythritol 2-phosphate (CDP-ME2P) to 2-C-methyl-D-erythritol 2,4-cyclodiphosphate (ME-CPP) with a corresponding release of cytidine 5-monophosphate (CMP). The chain is 2-C-methyl-D-erythritol 2,4-cyclodiphosphate synthase from Carboxydothermus hydrogenoformans (strain ATCC BAA-161 / DSM 6008 / Z-2901).